Reading from the N-terminus, the 195-residue chain is Endoribonuclease YbeY (195 aa).

Zn(2+) contacts are provided by H152, H156, and H162.

Belongs to the endoribonuclease YbeY family. Zn(2+) is required as a cofactor.

Its subcellular location is the cytoplasm. Its function is as follows. Single strand-specific metallo-endoribonuclease involved in late-stage 70S ribosome quality control and in maturation of the 3' terminus of the 16S rRNA. The chain is Endoribonuclease YbeY from Rhodopseudomonas palustris (strain HaA2).